The following is a 273-amino-acid chain: Putative pyruvate, phosphate dikinase regulatory protein (273 aa).

149 to 156 serves as a coordination point for ADP; the sequence is GPSRTSKT.

Belongs to the pyruvate, phosphate/water dikinase regulatory protein family. PDRP subfamily.

It carries out the reaction N(tele)-phospho-L-histidyl/L-threonyl-[pyruvate, phosphate dikinase] + ADP = N(tele)-phospho-L-histidyl/O-phospho-L-threonyl-[pyruvate, phosphate dikinase] + AMP + H(+). The enzyme catalyses N(tele)-phospho-L-histidyl/O-phospho-L-threonyl-[pyruvate, phosphate dikinase] + phosphate + H(+) = N(tele)-phospho-L-histidyl/L-threonyl-[pyruvate, phosphate dikinase] + diphosphate. Bifunctional serine/threonine kinase and phosphorylase involved in the regulation of the pyruvate, phosphate dikinase (PPDK) by catalyzing its phosphorylation/dephosphorylation. This is Putative pyruvate, phosphate dikinase regulatory protein from Rickettsia felis (strain ATCC VR-1525 / URRWXCal2) (Rickettsia azadi).